A 270-amino-acid chain; its full sequence is Bacterial microcompartment shell protein PduB (270 aa).

2 consecutive BMC circularly permuted domains span residues 47–152 (EFVG…DRTF) and 154–262 (DVYA…GSEP).

It belongs to the EutL/PduB family. In terms of assembly, homotrimerizes to form a pseudohexamer with a central pore. The trimers pack into an array. Both forms interact with shell protein PduA. In purified BMCs seen as a 30.0 kDa and 25.0 kDa form; the smaller form is called PduB'.

Its subcellular location is the bacterial microcompartment. The protein operates within polyol metabolism; 1,2-propanediol degradation. The two proteins produced are among the major shell proteins of the bacterial microcompartment (BMC) shell dedicated to 1,2-propanediol (1,2-PD) degradation. Overexpression of the gene gives large amorphous intracellular structures; when only PduB is overexpressed large circular bodies are observed which contain concentric rings, whereas with PduB' overexpression internal bodies with regular straight-lined structures were generated. The N-terminus of the long form (PduB) is required for correct formation of BMCs. May play a major role in binding the enzyme contents to the shell. Functionally, expression of a cosmid containing the full 21-gene pdu operon in E.coli allows E.coli to grow on 1,2-propanediol (1,2-PD) with the appearance of BMCs in its cytoplasm. Its function is as follows. The 1,2-PD-specific bacterial microcompartment (BMC) concentrates low levels of 1,2-PD catabolic enzymes, concentrates volatile reaction intermediates thus enhancing pathway flux and keeps the level of toxic, mutagenic propionaldehyde low. The polypeptide is Bacterial microcompartment shell protein PduB (Citrobacter freundii).